The sequence spans 534 residues: ATP synthase subunit alpha (534 aa).

Position 170-177 (170-177) interacts with ATP; the sequence is GDRQTGKT. Residues 505-534 are disordered; it reads HEDARVKSETAQAAGKDKDEKAAATAGAGK.

Belongs to the ATPase alpha/beta chains family. In terms of assembly, F-type ATPases have 2 components, CF(1) - the catalytic core - and CF(0) - the membrane proton channel. CF(1) has five subunits: alpha(3), beta(3), gamma(1), delta(1), epsilon(1). CF(0) has three main subunits: a(1), b(2) and c(9-12). The alpha and beta chains form an alternating ring which encloses part of the gamma chain. CF(1) is attached to CF(0) by a central stalk formed by the gamma and epsilon chains, while a peripheral stalk is formed by the delta and b chains.

The protein resides in the cell inner membrane. It catalyses the reaction ATP + H2O + 4 H(+)(in) = ADP + phosphate + 5 H(+)(out). Its function is as follows. Produces ATP from ADP in the presence of a proton gradient across the membrane. The alpha chain is a regulatory subunit. The polypeptide is ATP synthase subunit alpha (Acidobacterium capsulatum (strain ATCC 51196 / DSM 11244 / BCRC 80197 / JCM 7670 / NBRC 15755 / NCIMB 13165 / 161)).